A 403-amino-acid chain; its full sequence is 8-amino-7-oxononanoate synthase (403 aa).

Arginine 30 provides a ligand contact to substrate. 121–122 (GY) provides a ligand contact to pyridoxal 5'-phosphate. Histidine 146 is a substrate binding site. Residues serine 192, histidine 220, and threonine 248 each contribute to the pyridoxal 5'-phosphate site. Residue lysine 251 is modified to N6-(pyridoxal phosphate)lysine. Residue threonine 367 coordinates substrate.

Belongs to the class-II pyridoxal-phosphate-dependent aminotransferase family. BioF subfamily. In terms of assembly, homodimer. Pyridoxal 5'-phosphate serves as cofactor.

The catalysed reaction is 6-carboxyhexanoyl-[ACP] + L-alanine + H(+) = (8S)-8-amino-7-oxononanoate + holo-[ACP] + CO2. It functions in the pathway cofactor biosynthesis; biotin biosynthesis. Catalyzes the decarboxylative condensation of pimeloyl-[acyl-carrier protein] and L-alanine to produce 8-amino-7-oxononanoate (AON), [acyl-carrier protein], and carbon dioxide. The polypeptide is 8-amino-7-oxononanoate synthase (Burkholderia vietnamiensis (strain G4 / LMG 22486) (Burkholderia cepacia (strain R1808))).